The sequence spans 186 residues: MESLSLSHHFLIAMPGMGDPLFAKSLVYLCEHGEHGAMGLIINKPSGIAMAQLFDQIDLPLDDEDTRTGLVYFGGPVQPDRGFVLHQPAGNWQSSLMVTDDIALTTSKDVLVAVSEGKKPEQLLISLGYAGWSAGQLEKEIADNGWLTVPAEPSIVFDLPYEERYDAAMALLGFDPSLLSSDVGHA.

It belongs to the UPF0301 (AlgH) family.

This chain is UPF0301 protein CV_3909, found in Chromobacterium violaceum (strain ATCC 12472 / DSM 30191 / JCM 1249 / CCUG 213 / NBRC 12614 / NCIMB 9131 / NCTC 9757 / MK).